A 150-amino-acid chain; its full sequence is Large ribosomal subunit protein uL13 (150 aa).

The protein belongs to the universal ribosomal protein uL13 family. In terms of assembly, part of the 50S ribosomal subunit.

This protein is one of the early assembly proteins of the 50S ribosomal subunit, although it is not seen to bind rRNA by itself. It is important during the early stages of 50S assembly. The chain is Large ribosomal subunit protein uL13 from Chlamydia abortus (strain DSM 27085 / S26/3) (Chlamydophila abortus).